We begin with the raw amino-acid sequence, 928 residues long: Mitogen-activated protein kinase kinase kinase dlk-1 (928 aa).

The tract at residues 1-72 is disordered; sequence MTSTTMVTTL…GQKEGSPDPK (72 aa). Positions 42–52 are enriched in polar residues; sequence LVTQSAPNTPI. Basic and acidic residues predominate over residues 53-69; that stretch reads QHREQANAEFGQKEGSP. A Protein kinase domain is found at 135 to 377; the sequence is ISELEWLGSG…FSHIRQHWEI (243 aa). Residues 141 to 149 and K162 each bind ATP; that span reads LGSGSQGAV. Residue D246 is the Proton acceptor of the active site. Residues 459 to 480 form a leucine-zipper region; sequence LQGCFTELKLKESELAEWEKDL. Disordered regions lie at residues 483–575, 644–696, and 802–845; these read REQW…DAIR, RRVS…PSRN, and ENAN…SMES. Positions 509–519 are enriched in acidic residues; it reads GYDDMSSDEDV. Positions 530–557 are enriched in low complexity; that stretch reads SNTSSSSGVQSSPFSRQSSSRSSAGQQT. Residues 605 to 814 are important for interaction between isoform a and isoform c; it reads SAGAGSCTAI…NDVDLTSSMD (210 aa). The span at 647 to 656 shows a compositional bias: polar residues; it reads STSVNKSTAV. The segment covering 677 to 695 has biased composition (low complexity); that stretch reads SCSSPRSSSKLNRSSYPSR. Over residues 823-833 the composition is skewed to acidic residues; sequence ADVESSEEDEG. Phosphoserine occurs at positions 874 and 878. The SDGLSD hexapeptide motif lies at 874–879; the sequence is SDGLSD.

The protein belongs to the protein kinase superfamily. STE Ser/Thr protein kinase family. MAP kinase kinase kinase subfamily. As to quaternary structure, homooligomer (via leucine zipper domain and hexapeptide motif). Isoform a (via leucine zipper domain) forms a heterooligomer with isoform c (via leucine zipper domain). Isoform c does not self-associate. Mg(2+) is required as a cofactor. Ubiquitinated by rpm-1. Negatively regulated by ubiquitination by fsn-1 bound rpm-1, followed by degradation. In terms of processing, phosphorylation at Ser-874 and/or at Ser-878 abolishes interaction with isoform c and promotes binding to isoform a kinase domain (likely in trans) resulting in isoform a self-association and activation. In terms of tissue distribution, expressed in nerve ring, nerve cord, neurons, and pharynx.

It is found in the synapse. It localises to the cytoplasm. Its subcellular location is the cell projection. The protein resides in the axon. The protein localises to the dendrite. It is found in the cilium. The catalysed reaction is L-seryl-[protein] + ATP = O-phospho-L-seryl-[protein] + ADP + H(+). The enzyme catalyses L-threonyl-[protein] + ATP = O-phospho-L-threonyl-[protein] + ADP + H(+). Its activity is regulated as follows. Inactive when associated with isoform c. Dissociation from isoform c, which is dependent on the phosphorylation of the C-terminal hexapeptide, results in self-association and activation. Transient increase in Ca(2+) levels caused by axonal injury or synaptic activity triggers the dissociation of isoform a from isoform c; the dissociation may be influenced by the phosphorylation status of the C-terminal hexapeptide. Functionally, component of a MAP kinase pathway that functions presynaptically to regulate synaptic architecture and presynaptic differentiation. Phosphorylates and activates mkk-4. Has a role in axonal regrowth following injury and synaptogenesis. Plays a role in modulating polymerization of neuronal microtubules. Also promotes tubulin post-translational modifications that protect microtubules. Plays a role in cilium length regulation, possibly by reducing rab-5 mediated endocytosis, and may also have a role in intraflagellar transport in cilia. Plays a role in the formation of muscle connections, also called muscle arm extensions, between the body wall and the motor axons in the dorsal and ventral cord. Its function is as follows. Has a role in synapse and axon development, and in axonal regrowth following injury. In terms of biological role, by forming heterooligomers with isoform a, acts as an inhibitor of isoform a activation. Its inhibitory function is independent of its catalytic activity. This Caenorhabditis elegans protein is Mitogen-activated protein kinase kinase kinase dlk-1 (dlk-1).